The sequence spans 683 residues: Hexamerin 70b (683 aa).

Positions 1-21 (MIVIMKAGFLFLASLCLLVQA) are cleaved as a signal peptide. The 122-residue stretch at 32-153 (VTRQKNIYEL…VAVIHRPDTK (122 aa)) folds into the Hemocyanin N-terminal domain. Positions 159-428 (PMYEVMPHLY…SIYKTILDYY (270 aa)) constitute a Hemocyanin middle domain. An N-linked (GlcNAc...) asparagine glycan is attached at Asn203. Residues 437-673 (KYTTEELNFP…IHVKEVLVHH (237 aa)) form the Hemocyanin C-terminal domain.

It belongs to the hemocyanin/hexamerin family. In terms of assembly, probable homohexamer. In terms of tissue distribution, expressed in the fat body and secreted into the hemolymph (at protein level). Present in trophocytes and oenocytes of the fat body (at protein level).

It is found in the secreted. The protein resides in the nucleus. It localises to the cytoplasm. The protein localises to the cytoplasmic granule. Storage protein that may function as a nutrient supply to compensate for lack of dietary proteins during metamorphosis and egg production. The polypeptide is Hexamerin 70b (Apis mellifera (Honeybee)).